Reading from the N-terminus, the 255-residue chain is ATP synthase subunit a 2 (255 aa).

Helical transmembrane passes span 24–44 (WFGI…VFIL), 86–106 (LIGP…AVDL), 131–151 (DINI…GYTF), 205–225 (MIFI…SVPW), and 226–246 (ALFH…LTVV).

Belongs to the ATPase A chain family. F-type ATPases have 2 components, CF(1) - the catalytic core - and CF(0) - the membrane proton channel. CF(1) has five subunits: alpha(3), beta(3), gamma(1), delta(1), epsilon(1). CF(0) has three main subunits: a(1), b(2) and c(9-12). The alpha and beta chains form an alternating ring which encloses part of the gamma chain. CF(1) is attached to CF(0) by a central stalk formed by the gamma and epsilon chains, while a peripheral stalk is formed by the delta and b chains.

It is found in the cell inner membrane. Its function is as follows. Key component of the proton channel; it plays a direct role in the translocation of protons across the membrane. The sequence is that of ATP synthase subunit a 2 from Vibrio campbellii (strain ATCC BAA-1116).